We begin with the raw amino-acid sequence, 203 residues long: 2-phospho-L-lactate guanylyltransferase (203 aa).

Belongs to the CofC family. Homodimer.

The enzyme catalyses (2S)-2-phospholactate + GTP + H(+) = (2S)-lactyl-2-diphospho-5'-guanosine + diphosphate. Its pathway is cofactor biosynthesis; coenzyme F420 biosynthesis. Functionally, guanylyltransferase that catalyzes the activation of (2S)-2-phospholactate (2-PL) as (2S)-lactyl-2-diphospho-5'-guanosine, via the condensation of 2-PL with GTP. It is involved in the biosynthesis of coenzyme F420, a hydride carrier cofactor. In Halomicrobium mukohataei (strain ATCC 700874 / DSM 12286 / JCM 9738 / NCIMB 13541) (Haloarcula mukohataei), this protein is 2-phospho-L-lactate guanylyltransferase.